The primary structure comprises 92 residues: uncharacterized protein (92 aa).

This is an uncharacterized protein from Treponema pallidum (strain Nichols).